The following is a 148-amino-acid chain: Hemoglobin subunit beta (148 aa).

Residues 3-148 (XWTDXERHVI…AVAALGKQYH (146 aa)) form the Globin domain. Residues H64 and H93 each contribute to the heme b site.

Belongs to the globin family. As to quaternary structure, heterotetramer of two alpha chains and two beta chains. In terms of tissue distribution, red blood cells.

Functionally, involved in oxygen transport from gills to the various peripheral tissues. The protein is Hemoglobin subunit beta (hbb) of Silurus asotus (Amur catfish).